The following is a 314-amino-acid chain: UDP-N-acetylenolpyruvoylglucosamine reductase (314 aa).

Residues 27–192 form the FAD-binding PCMH-type domain; that stretch reads KIGGKARYIV…LRAVFCLKFA (166 aa). Residue Arg-171 is part of the active site. Ser-223 acts as the Proton donor in catalysis. Glu-293 is an active-site residue.

It belongs to the MurB family. FAD serves as cofactor.

Its subcellular location is the cytoplasm. It carries out the reaction UDP-N-acetyl-alpha-D-muramate + NADP(+) = UDP-N-acetyl-3-O-(1-carboxyvinyl)-alpha-D-glucosamine + NADPH + H(+). It participates in cell wall biogenesis; peptidoglycan biosynthesis. Functionally, cell wall formation. In Caldicellulosiruptor bescii (strain ATCC BAA-1888 / DSM 6725 / KCTC 15123 / Z-1320) (Anaerocellum thermophilum), this protein is UDP-N-acetylenolpyruvoylglucosamine reductase.